The chain runs to 54 residues: uncharacterized protein (54 aa).

This is an uncharacterized protein from Haemophilus influenzae (strain ATCC 51907 / DSM 11121 / KW20 / Rd).